A 253-amino-acid polypeptide reads, in one-letter code: Blue-light photoreceptor (253 aa).

In terms of domain architecture, PAS spans 6–79 (QFDVILKALN…AKIRHAINEK (74 aa)). An S-4a-FMN cysteine modification is found at cysteine 56. Residues 80-133 (STANVLLKNYRKDGTSFMNELTIEPIYDDHEHLYFVGIQKDVTTEHDYQLELEK) enclose the PAC domain. In terms of domain architecture, STAS spans 142–253 (STPIVPIKEN…STIKEALQFY (112 aa)).

FMN binds covalently to cysteine after exposure to blue light and this bond is spontaneously broken in the dark.

Functionally, exhibits the same spectroscopical features and blue-light induced photochemistry as plants phototropins, with the reversible formation of a blue-shifted photoproduct, assigned to an FMN-cysteine thiol adduct. Positive regulator in the activation of the general stress transcription factor sigma-B. This chain is Blue-light photoreceptor, found in Listeria monocytogenes serovar 1/2a (strain ATCC BAA-679 / EGD-e).